The primary structure comprises 495 residues: Glycerol kinase (495 aa).

Threonine 11 serves as a coordination point for ADP. ATP contacts are provided by threonine 11, threonine 12, and serine 13. Threonine 11 is a sn-glycerol 3-phosphate binding site. Sn-glycerol 3-phosphate contacts are provided by arginine 81, glutamate 82, tyrosine 133, and aspartate 242. Residues arginine 81, glutamate 82, tyrosine 133, aspartate 242, and glutamine 243 each contribute to the glycerol site. ADP is bound by residues threonine 264, glycine 307, glycine 407, and asparagine 411. ATP is bound by residues threonine 264, glycine 307, and glycine 407.

This sequence belongs to the FGGY kinase family.

It carries out the reaction glycerol + ATP = sn-glycerol 3-phosphate + ADP + H(+). Its pathway is polyol metabolism; glycerol degradation via glycerol kinase pathway; sn-glycerol 3-phosphate from glycerol: step 1/1. Inhibited by fructose 1,6-bisphosphate (FBP). Key enzyme in the regulation of glycerol uptake and metabolism. Catalyzes the phosphorylation of glycerol to yield sn-glycerol 3-phosphate. This Thermus brockianus protein is Glycerol kinase.